The primary structure comprises 61 residues: N-acetyl-D-glucosamine kinase (61 aa).

Phosphotyrosine is present on Tyr-30. Ser-45 contributes to the ATP binding site.

The protein belongs to the eukaryotic-type N-acetylglucosamine kinase family. As to quaternary structure, homodimer.

It carries out the reaction N-acetyl-D-glucosamine + ATP = N-acetyl-D-glucosamine 6-phosphate + ADP + H(+). It catalyses the reaction aldehydo-N-acetyl-D-mannosamine + ATP = aldehydo-N-acetyl-D-mannosamine 6-phosphate + ADP + H(+). The enzyme catalyses N-acetyl-D-muramoyl-L-alanyl-D-isoglutamine + ATP = 6-O-phospho-N-acetyl-D-muramoyl-L-alanyl-D-isoglutamine + ADP + H(+). Its pathway is amino-sugar metabolism; N-acetylneuraminate degradation. Functionally, converts endogenous N-acetylglucosamine (GlcNAc), a major component of complex carbohydrates, from lysosomal degradation or nutritional sources into GlcNAc 6-phosphate. Also has N-acetylmannosamine (ManNAc) kinase activity. Involved in the N-glycolylneuraminic acid (Neu5Gc) degradation pathway. Also involved in innate immunity by promoting detection of bacterial peptidoglycan by NOD2: acts by catalyzing phosphorylation of muramyl dipeptide (MDP), a fragment of bacterial peptidoglycan, to generate 6-O-phospho-muramyl dipeptide, which acts as a direct ligand for NOD2. The sequence is that of N-acetyl-D-glucosamine kinase from Mesocricetus auratus (Golden hamster).